Here is a 112-residue protein sequence, read N- to C-terminus: Putative pterin-4-alpha-carbinolamine dehydratase (112 aa).

The protein belongs to the pterin-4-alpha-carbinolamine dehydratase family.

It carries out the reaction (4aS,6R)-4a-hydroxy-L-erythro-5,6,7,8-tetrahydrobiopterin = (6R)-L-erythro-6,7-dihydrobiopterin + H2O. This is Putative pterin-4-alpha-carbinolamine dehydratase from Dechloromonas aromatica (strain RCB).